Consider the following 102-residue polypeptide: Monothiol glutaredoxin-S8 (102 aa).

Residues M1–W101 form the Glutaredoxin domain. C21 contacts [2Fe-2S] cluster. A Responsive for interaction with TGA factors motif is present at residues A99–L102.

The protein belongs to the glutaredoxin family. CC-type subfamily.

The protein resides in the cytoplasm. Its subcellular location is the nucleus. Its function is as follows. May only reduce GSH-thiol disulfides, but not protein disulfides. The sequence is that of Monothiol glutaredoxin-S8 (GRXS8) from Arabidopsis thaliana (Mouse-ear cress).